A 279-amino-acid polypeptide reads, in one-letter code: GDT1-like protein 3 (279 aa).

A signal peptide spans 1 to 23 (MDPNPRLLILLVLLAFSATVAVA). Transmembrane regions (helical) follow at residues 64–84 (VGPG…VSEI), 103–123 (IVLS…TGLG), 135–155 (TNSA…YIAW), 186–206 (FFGR…FLAE), 224–244 (AIGV…LAVI), and 258–278 (VATI…FYPP).

This sequence belongs to the GDT1 family.

It localises to the membrane. This chain is GDT1-like protein 3, found in Oryza sativa subsp. japonica (Rice).